The following is a 192-amino-acid chain: tRNA (pseudouridine(54)-N(1))-methyltransferase (192 aa).

The S-adenosyl-L-methionine site is built by leucine 114 and glycine 138.

The protein belongs to the methyltransferase superfamily. TrmY family. Homodimer.

Its subcellular location is the cytoplasm. The catalysed reaction is pseudouridine(54) in tRNA + S-adenosyl-L-methionine = N(1)-methylpseudouridine(54) in tRNA + S-adenosyl-L-homocysteine + H(+). Its function is as follows. Specifically catalyzes the N1-methylation of pseudouridine at position 54 (Psi54) in tRNAs. This chain is tRNA (pseudouridine(54)-N(1))-methyltransferase, found in Aeropyrum pernix (strain ATCC 700893 / DSM 11879 / JCM 9820 / NBRC 100138 / K1).